The sequence spans 90 residues: Antitoxin VapB35 (90 aa).

The disordered stretch occupies residues 53–90 (GSVQPARVHGPAPRPTIPMRGGLDSGTLLERMRAEERY).

Belongs to the phD/YefM antitoxin family.

Antitoxin component of a type II toxin-antitoxin (TA) system. Neutralizes the effect of cognate toxin VapC35. The protein is Antitoxin VapB35 (vapB35) of Mycobacterium tuberculosis (strain CDC 1551 / Oshkosh).